We begin with the raw amino-acid sequence, 2294 residues long: MKGHQFKSWIFELREIVREIKNAHYFLDSWTQFNSVGSFIHIFFHQERFRKLLDPRIFSILLLRNSQGSTSNRYFTIKGVVLFVVAALLYRINNRNMVESKNLYLKGLLPIPMNSIGPRNDTSEESFGSCNINRLIVSLLYLTKGKKISESCFRDPKESTWVLPITQKCIMPESNWSSRWWRNWIGKKRGFCCKISNETVAGIDISFKEKDIKYLEFLFVYYMDDPIRKGHDWELFDRLSPSKRRNIINLNSGQLFEILVKDWICYLMFAFREKIPIEVEGFCKQQGAGSTIQSNDIEHVSHLFSRNKWAISLQNCAQFHMWQFHQDLFVSWGKNPHESDFFRKISRENWIWLDNVWLVNKDRFFSKVRNVSSNIQYDSTRSSFVQVTDSSQLNGSSDQFIDPFDSISNEDSEYHYHTLINQREIQQLKERSILLDPSFIQTEGREIESDRFPKYLSGYSSMPRLFTEREKRMNNHLLPEESEEFLGNPTRAIRSFFSDRWSELHLGSNPTERSTRDQKLLKKEQDVSFVPSRRSENKEIVNIFKIITYLQNTVSIHPISSDLGCDMVPKDELDMDSSNKISFLNKNPFFDLFHLFHERKRGGYTLRHESEERFQEMADLFTLSITEPDLVYHKGFAFSIDSYGLDQRQFLKEVFNFRDESKKKSLLVLPPIFYEENESFYRRLRKIWVRISCGNYLEDQKRVVFASNNIMEAVNQYRLIRNMIQIQFQYSPYGYIRNVLNRFFLMKRPDRNFEYGIQRDLIGNDTLNHRTIMKDTINQHLSNLKKSQKKWFDPLIFLSQTERSINRDPNAYRYKWSNGSKNFQEHLEHFVSERKSRFQVVFDQLCINQYSIDWSEVIDKKDLSKSLRFFLSKLLRFFLSKLLLFLSKLLLFLSNSLPFFFVSFENIPIHRSEIHIYELKGPNDQLCNQLLESIGLQIVHLKKLKPFLLDDHNTSQKSKFLINGGTISPFLFNKIPKWMIDSFHTRKNRRKSFDNTDSAYFSIVSHDQDNWLNPVKPFQRSSLISSFSKANRLRFLNNPHHFCFYCNKRFPFYVEKARLNNSDFTFTYGQFLTILFIHNKTFSSCGGKKKHAFLERDTISPSSIESQVSNIFISNDFPQSGDERYNLYKSFHFPIRSDPLVRRAIYSIADISGTPLIEGQRVNFERTYCQTLSDMNLSDSEEKSLHQYLNFNSNMGLIHTPCSEKYLQRKKRSLCLKKCVDKGQMDRTFQRDSAFSTLSKWNLFQTYMPWFFTSTGYKYLNLIFLDTFSDLLRILSSSQKFVSIFHDIMHGLDISWRILQKKLCLPQRNLISEISSKSLHNLLLSEEMIHRNNESSLISTHLRSPNVREVLYSILFLLLVAGYIVRTHLLFVSRAYSELQTEFEKIKSLMIPSYMIELRKLLDRYPTSELNSFWLKNLFLVALEQLGDCLEEIRGSGGNMLWGGDPAYGVKSIRSKKKDLKINFIDIIDLISIIPNPINRITFSRNTRHLSHTSKEIYSLIRKRKNVSGDWIDDKIESWVANSDSIDDKEREFLVQFSTLRAEKRIDQILLSLTHSDHLSKNDSGYQMIEQPGTIYLRYLVDIHKKYLMNYEFNTSCLAERRIFLAHYQTITYSQTSCGANSFHFPSHGKPFSLRLALSPSRSILVIGSIGTGRSYLVKYLATNSYVPFITVFLNKFLDNKPKGFFIDDIDIDDSDDIDASNDIDRELDTELELLTMMNALTMDMMLEIDRFYITLQFELAKAMSPCIIWIPNIHDLDVNESSYLALGLLVNSLSRDCERCSTRNILVIASTHIPQKVDPALIAPNKLNTCIKIRRLLIPQQRKHFFTLSYTRGFHLEKKMFHTNGFESITMGSSARDLVALTNEALSISITQKKSIIDTNTIRSALHRQTWDLRSQVRSVQDHGILFYQIGRAVAQNVLISNCPIDPISIYMKKKSCNEGDSYLYKWYFELGTSMKKFTILLYLLSCSAGSVAQDLWSLPVPDEKNRITSYGFVENDSDLVHGLLEVQGALVGSSRTEKDCSQFDNDRVTLLFRSEPRDPLYMMQDGSCSIVDQRFLYEKYESEFEEGEGEGVLDPQQIEEDLFNHIVWAPRIWRPRGFLFDCIERPNELGFPYSAGSFRGKRIIYDEKYELQENDSEFLQSGTMQYQRRDRSSKEQGFFRISQFIWDPADPLFFLFKDQPFVSVFSHREFFADEEMSKGLLTSQTDPPTSIYKRWFIKNTQEKHFELLIQRQRWLRTNSSLSNGFFRSNTRSESYQYLSNLFISNGTLLDRMTKTLLKKRWLFSDEMKIGFM.

1648 to 1655 (GSIGTGRS) lines the ATP pocket.

The protein belongs to the Ycf2 family.

The protein localises to the plastid. The protein resides in the chloroplast stroma. Its function is as follows. Probable ATPase of unknown function. Its presence in a non-photosynthetic plant (Epifagus virginiana) and experiments in tobacco indicate that it has an essential function which is probably not related to photosynthesis. The chain is Protein Ycf2 from Arabidopsis thaliana (Mouse-ear cress).